The primary structure comprises 155 residues: MAKGEGHILAQNKKARHDYHIVETVEAGIVLTGTEIKSVRAARIQLKDGFAQIKNGEAWLVNVHIAPFEQGNIWNADPERTRKLLLKKREITHLANELKGSGMTLVPLKVYLKDGFAKVLIGLAKGKHEYDKRETIKRRDQERDIKKQMKHYNAR.

Positions 135 to 147 are enriched in basic and acidic residues; it reads TIKRRDQERDIKK. Residues 135 to 155 are disordered; it reads TIKRRDQERDIKKQMKHYNAR.

The protein belongs to the SmpB family.

It localises to the cytoplasm. In terms of biological role, required for rescue of stalled ribosomes mediated by trans-translation. Binds to transfer-messenger RNA (tmRNA), required for stable association of tmRNA with ribosomes. tmRNA and SmpB together mimic tRNA shape, replacing the anticodon stem-loop with SmpB. tmRNA is encoded by the ssrA gene; the 2 termini fold to resemble tRNA(Ala) and it encodes a 'tag peptide', a short internal open reading frame. During trans-translation Ala-aminoacylated tmRNA acts like a tRNA, entering the A-site of stalled ribosomes, displacing the stalled mRNA. The ribosome then switches to translate the ORF on the tmRNA; the nascent peptide is terminated with the 'tag peptide' encoded by the tmRNA and targeted for degradation. The ribosome is freed to recommence translation, which seems to be the essential function of trans-translation. The polypeptide is SsrA-binding protein (Streptococcus pyogenes serotype M6 (strain ATCC BAA-946 / MGAS10394)).